Here is a 188-residue protein sequence, read N- to C-terminus: Holliday junction branch migration complex subunit RuvA (188 aa).

The tract at residues 1 to 62 (MIVGVRGVLV…EDAQLLYGFL (62 aa)) is domain I. The tract at residues 63-135 (ELGEKKLFER…LSGFDTELII (73 aa)) is domain II. The tract at residues 135-139 (ISASE) is flexible linker. The segment at 140-188 (PKSLAVAQASEALESLGFKKDKISKALGSCSAVDTAILVKEALKLLQTI) is domain III.

The protein belongs to the RuvA family. Homotetramer. Forms an RuvA(8)-RuvB(12)-Holliday junction (HJ) complex. HJ DNA is sandwiched between 2 RuvA tetramers; dsDNA enters through RuvA and exits via RuvB. An RuvB hexamer assembles on each DNA strand where it exits the tetramer. Each RuvB hexamer is contacted by two RuvA subunits (via domain III) on 2 adjacent RuvB subunits; this complex drives branch migration. In the full resolvosome a probable DNA-RuvA(4)-RuvB(12)-RuvC(2) complex forms which resolves the HJ.

The protein localises to the cytoplasm. In terms of biological role, the RuvA-RuvB-RuvC complex processes Holliday junction (HJ) DNA during genetic recombination and DNA repair, while the RuvA-RuvB complex plays an important role in the rescue of blocked DNA replication forks via replication fork reversal (RFR). RuvA specifically binds to HJ cruciform DNA, conferring on it an open structure. The RuvB hexamer acts as an ATP-dependent pump, pulling dsDNA into and through the RuvAB complex. HJ branch migration allows RuvC to scan DNA until it finds its consensus sequence, where it cleaves and resolves the cruciform DNA. In Sulfurimonas denitrificans (strain ATCC 33889 / DSM 1251) (Thiomicrospira denitrificans (strain ATCC 33889 / DSM 1251)), this protein is Holliday junction branch migration complex subunit RuvA.